Here is a 315-residue protein sequence, read N- to C-terminus: Gamma-hemolysin component C (315 aa).

The signal sequence occupies residues 1 to 29; sequence MLKNKILTTTLSVSLLAPLANPLLENAKA.

Belongs to the aerolysin family. As to quaternary structure, toxicity requires sequential binding and synergistic association of a class S and a class F component which form heterooligomeric complexes. HlgB (class F) associates with either hlgA thus forming an AB toxin or with hlgC thus forming a CB toxin.

The protein localises to the secreted. Functionally, toxin that seems to act by forming pores in the membrane of the cell. Has a hemolytic and a leucotoxic activity. In Staphylococcus aureus (strain NCTC 8325 / PS 47), this protein is Gamma-hemolysin component C (hlgC).